The following is a 250-amino-acid chain: PTB-containing, cubilin and LRP1-interacting protein (250 aa).

Positions Val-93–Gly-250 constitute a PID domain. Residues Asp-229–Gly-250 are disordered. Phosphoserine occurs at positions 236 and 247. A compositionally biased stretch (acidic residues) spans Val-241–Gly-250.

Found in a complex with PID1/PCLI1, LRP1 and CUBNI. Interacts with LRP1 and CUBN. Expressed in subcutaneous fat, heart, skeletal muscle, brain, colon, thymus, spleen, kidney, liver, small intestine, placenta, lung and peripheral blood leukocyte.

It is found in the cytoplasm. In terms of biological role, increases proliferation of preadipocytes without affecting adipocytic differentiation. The polypeptide is PTB-containing, cubilin and LRP1-interacting protein (PID1) (Homo sapiens (Human)).